The sequence spans 233 residues: MAALSPYKADFLKASIDGGVLKFGSFELKSKRISPYFFNAGDFYRADLLQAISTAYAKCIIEAHKSGQLDFDIVFGPAYKGIPLATAATDKLAQLDPETYGKICYSFDRKEAKDHGEGGNIVGAPLKGKRILIVDDVITAGTAKREAIAKIEKEGGIVAGIVVALDRMEKLPAADGDDSKPGPSAMGELRKEYGIPIFAILTLDDIIEGMRGLASPEDVEKTEEYRAKYKATD.

Lys-29 is a 5-phospho-alpha-D-ribose 1-diphosphate binding site. Residue 37 to 38 coordinates orotate; the sequence is FF. Residues 79–80, Arg-109, Lys-110, Lys-113, His-115, and 135–143 contribute to the 5-phospho-alpha-D-ribose 1-diphosphate site; these read YK and DDVITAGTA. Positions 139 and 167 each coordinate orotate.

The protein belongs to the purine/pyrimidine phosphoribosyltransferase family. PyrE subfamily. In terms of assembly, homodimer.

The enzyme catalyses orotidine 5'-phosphate + diphosphate = orotate + 5-phospho-alpha-D-ribose 1-diphosphate. It participates in pyrimidine metabolism; UMP biosynthesis via de novo pathway; UMP from orotate: step 1/2. Catalyzes the transfer of a ribosyl phosphate group from 5-phosphoribose 1-diphosphate to orotate, leading to the formation of orotidine monophosphate (OMP). The polypeptide is Orotate phosphoribosyltransferase (ura-5) (Neurospora crassa (strain ATCC 24698 / 74-OR23-1A / CBS 708.71 / DSM 1257 / FGSC 987)).